A 339-amino-acid chain; its full sequence is Adenosine deaminase (339 aa).

The Zn(2+) site is built by H15 and H17. Substrate contacts are provided by H17, D19, and G172. H199 contributes to the Zn(2+) binding site. The Proton donor role is filled by E202. Zn(2+) is bound at residue D279.

Belongs to the metallo-dependent hydrolases superfamily. Adenosine and AMP deaminases family. Adenosine deaminase subfamily. Zn(2+) serves as cofactor.

It carries out the reaction adenosine + H2O + H(+) = inosine + NH4(+). The enzyme catalyses 2'-deoxyadenosine + H2O + H(+) = 2'-deoxyinosine + NH4(+). In terms of biological role, catalyzes the hydrolytic deamination of adenosine and 2-deoxyadenosine. This is Adenosine deaminase from Lacticaseibacillus paracasei (strain ATCC 334 / BCRC 17002 / CCUG 31169 / CIP 107868 / KCTC 3260 / NRRL B-441) (Lactobacillus paracasei).